We begin with the raw amino-acid sequence, 208 residues long: Large ribosomal subunit protein uL4 (208 aa).

The tract at residues 44–79 is disordered; that stretch reads QRQGTHKSKERSEISGSTRKIGRQKGGGGARRGDMN.

Belongs to the universal ribosomal protein uL4 family. As to quaternary structure, part of the 50S ribosomal subunit.

One of the primary rRNA binding proteins, this protein initially binds near the 5'-end of the 23S rRNA. It is important during the early stages of 50S assembly. It makes multiple contacts with different domains of the 23S rRNA in the assembled 50S subunit and ribosome. In terms of biological role, forms part of the polypeptide exit tunnel. This is Large ribosomal subunit protein uL4 from Bacteroides thetaiotaomicron (strain ATCC 29148 / DSM 2079 / JCM 5827 / CCUG 10774 / NCTC 10582 / VPI-5482 / E50).